A 198-amino-acid chain; its full sequence is Mitrocomin (198 aa).

Positions 1–8 (MSMGSRYA) are excised as a propeptide. EF-hand domains lie at 19–54 (KWIA…IICK), 118–147 (DALF…AGIQ), and 148–183 (QSRG…FWYS). Residues Asp32, Asn34, Asn36, Gln38, Glu43, Asp125, Asp127, Asn129, Ser131, Glu136, Asp161, Asp163, Asp165, Lys167, and Glu172 each contribute to the Ca(2+) site.

The protein belongs to the aequorin family.

Functionally, ca(2+)-dependent bioluminescence photoprotein. Displays an emission peak at 470 nm (blue light). Trace amounts of calcium ion trigger the intramolecular oxidation of the chromophore, coelenterazine into coelenteramide and CO(2) with the concomitant emission of light. The sequence is that of Mitrocomin (MI17) from Mitrocoma cellularia (Cross jellyfish).